We begin with the raw amino-acid sequence, 106 residues long: COX assembly mitochondrial protein homolog (106 aa).

Ala-2 bears the N-acetylalanine mark. The region spanning 28-71 is the CHCH domain; sequence KERCSEQVQDFTKCCKNSGVLMVVKCRKENSALKECLTAYYNDP. 2 consecutive short sequence motifs (cx9C motif) follow at residues 31–41 and 53–63; these read CSEQVQDFTKC and CRKENSALKEC. Cystine bridges form between Cys-31–Cys-63 and Cys-41–Cys-53.

Belongs to the CMC family. In terms of assembly, component of the MITRAC (mitochondrial translation regulation assembly intermediate of cytochrome c oxidase complex) complex, the core components of this complex being COA3/MITRAC12 and COX14.

It is found in the mitochondrion. Component of the MITRAC (mitochondrial translation regulation assembly intermediate of cytochrome c oxidase complex) complex, that regulates cytochrome c oxidase assembly. This is COX assembly mitochondrial protein homolog (CMC1) from Homo sapiens (Human).